The primary structure comprises 269 residues: Probable membrane transporter protein YfcA (269 aa).

The Periplasmic portion of the chain corresponds to 1-7; the sequence is METFNSL. The chain crosses the membrane as a helical span at residues 8–28; that stretch reads FMVSPLLLGVLFFVAMLAGFI. Topologically, residues 29–30 are cytoplasmic; it reads DS. Residues 31–51 form a helical membrane-spanning segment; the sequence is IAGGGGLLTIPALMAAGMSPA. The Periplasmic portion of the chain corresponds to 52–84; sequence NALATNKLQACGGSISATIYFIRRKVVSLSDQK. A helical membrane pass occupies residues 85-105; it reads LNIAMTFVGSMSGALLVQYVQ. The Cytoplasmic segment spans residues 106 to 111; sequence ADVLRQ. Residues 112-132 traverse the membrane as a helical segment; that stretch reads ILPILVICIGLYFLLMPKLGE. At 133–156 the chain is on the periplasmic side; sequence EDRQRRMYGLPFALIAGGCVGFYD. Residues 157 to 177 form a helical membrane-spanning segment; sequence GFFGPAAGSFYALAFVTLCGF. Residues 178 to 197 are Cytoplasmic-facing; sequence NLAKATAHAKLLNATSNIGG. Residues 198–218 traverse the membrane as a helical segment; that stretch reads LLLFILGGKVIWATGFVMLVG. Residues 219 to 269 lie on the Periplasmic side of the membrane; it reads QFLGARMGSRLVLSKGQKLIRPMIVIVSAVMSAKLLYDSHGQEILHWLGMN.

This sequence belongs to the 4-toluene sulfonate uptake permease (TSUP) (TC 2.A.102) family.

The protein localises to the cell inner membrane. In Escherichia coli O157:H7, this protein is Probable membrane transporter protein YfcA (yfcA).